A 175-amino-acid chain; its full sequence is Large ribosomal subunit protein uL10 (175 aa).

The protein belongs to the universal ribosomal protein uL10 family. As to quaternary structure, part of the ribosomal stalk of the 50S ribosomal subunit. The N-terminus interacts with L11 and the large rRNA to form the base of the stalk. The C-terminus forms an elongated spine to which L12 dimers bind in a sequential fashion forming a multimeric L10(L12)X complex.

Functionally, forms part of the ribosomal stalk, playing a central role in the interaction of the ribosome with GTP-bound translation factors. The polypeptide is Large ribosomal subunit protein uL10 (Pelotomaculum thermopropionicum (strain DSM 13744 / JCM 10971 / SI)).